The primary structure comprises 1961 residues: Ankyrin-3 (1961 aa).

A compositionally biased stretch (basic and acidic residues) spans 1–10; sequence MSEEPKEKPA. The interval 1–25 is disordered; it reads MSEEPKEKPAKPAHRKRKGKKSDAN. Over residues 11–20 the composition is skewed to basic residues; that stretch reads KPAHRKRKGK. Position 22 is a phosphoserine (Ser-22). ANK repeat units follow at residues 56–85, 89–118, 122–151, 155–184, 186–213, 217–246, 250–279, 283–312, 316–345, 349–378, 382–411, 415–444, 448–477, 481–510, 514–543, 547–576, 580–609, 613–642, 646–675, 679–708, 712–741, 745–774, and 778–807; these read NGLNALHLASKEGHVEVVSELLQREANVDA, KGNTALHIASLAGQAEVVKVLVTNGANVNA, NGFTPLYMAAQENHLEVVRFLLDNGASQSL, DGFTPLAVALQQGHDQVVSLLLENDTKGKV, LPALHIAARKDDTKAAALLLQNDTNADV, SGFTPLHIAAHYGNINVATLLLNRAAAVDF, NDITPLHVASKRGNANMVKLLLDRGAKIDA, DGLTPLHCGARSGHEQVVEMLLDRSAPILS, NGLSPLHMATQGDHLNCVQLLLQHNVPVDD, DYLTALHVAAHCGHYKVAKVLLDKKASPNA, NGFTPLHIACKKNRIRVMELLLKHGASIQA, SGLTPIHVAAFMGHVNIVSQLMHHGASPNT, RGETALHMAARSGQAEVVRYLVQDGAQVEA, DDQTPLHISARLGKADIVQQLLQQGASPNA, SGYTPLHLAAREGHEDVAAFLLDHGASLSI, KGFTPLHVAAKYGKLEVASLLLQKSASPDA, SGLTPLHVAAHYDNQKVALLLLDQGASPHA, NGYTPLHIAAKKNQMDIATSLLEYGADANA, QGIASVHLAAQEGHVDMVSLLLSRNANVNL, SGLTPLHLAAQEDRVNVAEVLVNQGAHVDA, MGYTPLHVGCHYGNIKIVNFLLQHSAKVNA, NGYTALHQAAQQGHTHIINVLLQNNASPNE, and NGNTALAIARRLGYISVVDTLKVVTEEIMT. Ser-606 is modified (phosphoserine). At Leu-732 the chain carries Phosphoserine. Phosphoserine occurs at positions 830, 844, 850, 873, 914, 917, 923, 958, 960, and 1114. ZU5 domains lie at 985–1140 and 1142–1289; these read FLVS…VVSR and KQES…LADC. The interval 1274 to 1408 is UPA domain; the sequence is VSFTTNVSAR…SIKIRDTSQE (135 aa). A phosphoserine mark is found at Ser-1451, Ser-1462, Ser-1470, Ser-1473, and Gly-1560. Residues 1478 to 1562 form the Death domain; sequence TDIRMAIVAD…DIVTLLEGPI (85 aa). Disordered stretches follow at residues 1606 to 1678, 1698 to 1740, 1784 to 1818, 1844 to 1884, and 1915 to 1961; these read PNPF…DPLD, SVPG…VTED, WQNETPSGSLESPAQARRLTGGLLDRLDDSSDQAR, PEAK…PVSP, and MTRT…KKTH. The span at 1725-1740 shows a compositional bias: basic and acidic residues; sequence QQEKGKSGPDEEVTED. Positions 1784 to 1795 are enriched in polar residues; sequence WQNETPSGSLES. Ser-1795, Ser-1813, and Ser-1883 each carry phosphoserine. Over residues 1808 to 1818 the composition is skewed to basic and acidic residues; sequence DRLDDSSDQAR. Positions 1933–1961 are enriched in basic and acidic residues; sequence GSTRSEPKQGEGYKVKTKKEIRNVEKKTH.

As to quaternary structure, may be a constituent of a NFASC/NRCAM/ankyrin G complex. Interacts with RHBG. Directly interacts with DMD and betaDAG1; this interaction does not interfere with DMD-binding and is required for DMD and betaDAG1 retention at costameres. Interacts (via N-terminal ANK repeats) with SCHIP1 isoform 7 (via C-terminus); this interaction is required for the localization at axon initial segments (AISs) and nodes of Ranvier (NRs). Interacts with PLEC and FLNC. Interacts with KCNA1; this inhibits channel activity. Interacts with SCN5A. Interacts with PKP2 and GJA1/CX43. As to expression, expressed in many epithelial tissues, muscles and axons. Expressed in kidney, brain, skin, lung, liver, intestine, pancreas, heart and testis (at protein level). In testis, expressed in Leydig cells, but very weakly or not at all in Sertoli cells or seminiferous tubules. Expressed in macrophages (at protein level).

It is found in the cytoplasm. Its subcellular location is the cytoskeleton. The protein resides in the cell projection. The protein localises to the axon. It localises to the cell membrane. It is found in the sarcolemma. Its subcellular location is the postsynaptic cell membrane. The protein resides in the lysosome. The protein localises to the T-tubule. Its function is as follows. Membrane-cytoskeleton linker. May participate in the maintenance/targeting of ion channels and cell adhesion molecules at the nodes of Ranvier and axonal initial segments. In skeletal muscle, required for costamere localization of DMD and betaDAG1. Regulates KCNA1 channel activity in function of dietary Mg(2+) levels, and thereby contributes to the regulation of renal Mg(2+) reabsorption. Required for intracellular adhesion and junctional conductance in myocytes, potentially via stabilization of GJA1/CX43 protein abundance and promotion of PKP2, GJA1/CX43, and SCN5A/Nav1.5 localization to cell-cell junctions. This Mus musculus (Mouse) protein is Ankyrin-3 (Ank3).